Consider the following 644-residue polypeptide: Fructose-1,6-bisphosphatase class 3 (644 aa).

Belongs to the FBPase class 3 family. Mn(2+) serves as cofactor.

The catalysed reaction is beta-D-fructose 1,6-bisphosphate + H2O = beta-D-fructose 6-phosphate + phosphate. Its pathway is carbohydrate biosynthesis; gluconeogenesis. This chain is Fructose-1,6-bisphosphatase class 3, found in Oceanobacillus iheyensis (strain DSM 14371 / CIP 107618 / JCM 11309 / KCTC 3954 / HTE831).